We begin with the raw amino-acid sequence, 373 residues long: Lipoyl synthase (373 aa).

The disordered stretch occupies residues 12 to 36 (HVVSNDHPSSSPLQPGVKQSGEDKI). Cysteine 81, cysteine 86, cysteine 92, cysteine 107, cysteine 111, cysteine 114, and serine 323 together coordinate [4Fe-4S] cluster. The region spanning 93–312 (FSHGTATFMI…EEYGMALGFS (220 aa)) is the Radical SAM core domain. The disordered stretch occupies residues 346 to 373 (PAVSSTEHRERHTIASKSASKTESIRHR).

Belongs to the radical SAM superfamily. Lipoyl synthase family. It depends on [4Fe-4S] cluster as a cofactor.

It is found in the cytoplasm. The catalysed reaction is [[Fe-S] cluster scaffold protein carrying a second [4Fe-4S](2+) cluster] + N(6)-octanoyl-L-lysyl-[protein] + 2 oxidized [2Fe-2S]-[ferredoxin] + 2 S-adenosyl-L-methionine + 4 H(+) = [[Fe-S] cluster scaffold protein] + N(6)-[(R)-dihydrolipoyl]-L-lysyl-[protein] + 4 Fe(3+) + 2 hydrogen sulfide + 2 5'-deoxyadenosine + 2 L-methionine + 2 reduced [2Fe-2S]-[ferredoxin]. Its pathway is protein modification; protein lipoylation via endogenous pathway; protein N(6)-(lipoyl)lysine from octanoyl-[acyl-carrier-protein]: step 2/2. Catalyzes the radical-mediated insertion of two sulfur atoms into the C-6 and C-8 positions of the octanoyl moiety bound to the lipoyl domains of lipoate-dependent enzymes, thereby converting the octanoylated domains into lipoylated derivatives. The chain is Lipoyl synthase from Xylella fastidiosa (strain 9a5c).